Consider the following 240-residue polypeptide: Serine protease SplB (240 aa).

The signal sequence occupies residues 1 to 36; it reads MNKNVVIKSLAALTILTSVTGIGITLVEEVQQTAKA. Active-site charge relay system residues include histidine 75, aspartate 113, and serine 193.

This sequence belongs to the peptidase S1B family.

The protein resides in the secreted. Functionally, serine protease that cleaves specifically after the sequence Trp-Glu-Leu-Gln. In Staphylococcus aureus (strain MW2), this protein is Serine protease SplB (splB).